The chain runs to 110 residues: Parvalbumin alpha (110 aa).

Residue Ser2 is modified to N-acetylserine. A phosphoserine mark is found at Ser2, Ser8, and Ser24. 2 consecutive EF-hand domains span residues 39–74 (KSAD…FSSD) and 78–110 (LSAK…VAES). Ca(2+) contacts are provided by Asp52, Asp54, Ser56, Phe58, Glu60, and Glu63. Ser66 carries the phosphoserine modification. Ca(2+) is bound by residues Asp91, Asp93, Asp95, Lys97, and Glu102.

Its function is as follows. In muscle, parvalbumin is thought to be involved in relaxation after contraction. It binds two calcium ions. The chain is Parvalbumin alpha (Pvalb) from Rattus norvegicus (Rat).